Here is a 1756-residue protein sequence, read N- to C-terminus: MTDLRKLEALQALHAELVAVRQHRFEGLQVLETLLEEQTDAFKALIAKPARDTKDREALGKEPKKLKIGEEEYSLNEDFVNDCLKLADELDLNEKESARILIDCDAEGDVETQSRPLWECGVIRFHQERKYLLDCMRLILEIAADEDIDAGLQESFGVAAEDKIFGIPPPWERNKENQPTQVKKFIPRCMEAMKGVRSMLQCMADKANARNMLQQASLVRPLDNQETLDFSRLSLVEQHECLASILHAAVQRHHATIADFQDFIKILRKWDKYDHFLIHLIPVLAAYITEFGSPEGMGDLQQARRLNDFICKGGDEDSWALPVLGAAVRAWWIAEHNGFYLDDTVQDLRGINLDEEDEQRTKQFLDALKEGAFDFILSVAADCKAQEWQDPSQLGARQWLQRKIPSLPSEPFPFSHFLQHSLMVHLEGFVDATISNLPDVLRKLRTEEDEQRQLRPNHEQDMDLERFLIIISYAYEGRPDAAMSFWEDPDSNLAGFLQWASRRASTPLVSAFCEMLRCLADNEECATAAHNFLLDEGHQASGKMKRSQSLTWSQIFKELEYFTTKVCSERPNPPQASMHRPGRPGADPAEIEPESALMLECYLRLIAKLATESEIARKRLIMDEDFNLVDTILKLSVGVIPHRLRACIFYVLKALMIRKTHEELDAMWRWVEAWMTNPFSSLPGSQGAPQRISFLGQTPGPQECMEMMFREFGTGFEQSNAFIQLLTTLLVPPEGLNSLNDSVPFPEWLGSSIRTLGIEPYVDFVFDVFANRTKDISDPSQLRILRLSCLDFVMVCLVTFNEDLIVLGHESNISIDDAMAATNLATYVRLHPFSRVMEWLFNEKVITSLINTIHQDPISLGSASPDSPLVVSILRAIQVMIKALELQETYLHLVRPEVLRYQGEAGVRRKPVANAAYSAFEDGILSHLSLVVDLGKYCNLGHAELTLACLKLLEKISTSSRILSAWSPDSGRLGHRNKAIVQLERNGEGETISASLSASIMATLDPALAASGENYRVKLAILDFLYACLRATPDQPTIAHQLLGFHCELSKLGIEPKGPFDMQKSLFHSLLNVLITLTVSEEEQGMRGYLVTLKYRVLRILQLLWKSPLSASLVMDELRATNFLFHMLLREVQIQPQLPWDGQLVTGCEFLLSDASLAYIDYLASRAAIFEYIGKELCSVSQNRIPSIKRQIFDALNGQIFVDEEAPLTIPSIFDFFDFINTDYKWEEIPSPHFTYLKDLDLGPCILEHKYAGVHYDIRKAQEILALKRKEYEHSQLATPEFLETVELEEKVLIEWLTVRNRANLLLTARLNLLQAWANLLLVMIESNDFKSTPKMAFLLQALQAILPTLEAFSSLKSDEAFELARVAKVLLWKLDFSQDSDAGLDREQFTVGNLIGDKLFQLFQLCLSAISQCSGTPELRSLYYSICYRYLTAVVDNDATVAATPASSTIGPTRSVTNARARTLKAITLYGDRLLNVICDDAYGSDTTCQTAAMILLNALVHTSRASSAAGVSPADVDCPIIDALNRLNFIGVLVDSLKEILNEWLAPSSTFDPSLSTNASPSLPIPASPSQQYTSAKLALLLQLCQTRQGAKYVLQANLFRALEQSGVFAADPELVEVDSESGVPRVVALERHYALLVALARVVGAAVTARGAHNIVQGRKFLTQHRGLVVHVLKKNAGIGGGVVGNSLASSINGGSTATMTRRDEILAQQALEERIEELAEAFMLLITATGFLEYESEQVPSEQPRAHTTFFH.

Belongs to the NUP186/NUP192/NUP205 family. Component of the nuclear pore complex (NPC). NPC constitutes the exclusive means of nucleocytoplasmic transport. NPCs allow the passive diffusion of ions and small molecules and the active, nuclear transport receptor-mediated bidirectional transport of macromolecules such as proteins, RNAs, ribonucleoparticles (RNPs), and ribosomal subunits across the nuclear envelope. Due to its 8-fold rotational symmetry, all subunits are present with 8 copies or multiples thereof. Part of a tetrameric NUP192-NUP170-NIC96-NUP53 module.

It is found in the nucleus. The protein localises to the nuclear pore complex. Functions as a component of the nuclear pore complex (NPC). NPC components, collectively referred to as nucleoporins (NUPs), can play the role of both NPC structural components and of docking or interaction partners for transiently associated nuclear transport factors. NUP192 is located to the NPC core at the nuclear membrane and is essential for de novo assembly of NPCs. The sequence is that of Nucleoporin NUP192 (NUP192) from Chaetomium thermophilum (strain DSM 1495 / CBS 144.50 / IMI 039719) (Thermochaetoides thermophila).